Reading from the N-terminus, the 437-residue chain is Transcription factor 12 (437 aa).

Disordered stretches follow at residues 1 to 68, 80 to 123, and 244 to 335; these read EFHD…QTGD, PDHT…YENS, and ASNT…ERRM. Over residues 13 to 37 the composition is skewed to polar residues; it reads VSPTDISTSLPPMSSFHRGSTSSSP. The residue at position 44 (Thr-44) is a Phosphothreonine. Phosphoserine is present on Ser-64. A compositionally biased stretch (low complexity) spans 83–94; sequence TSSSFPSNPSTP. Composition is skewed to polar residues over residues 95–107 and 114–123; these read VGSP…TSQW and APSSPSYENS. 2 stretches are compositionally biased toward basic and acidic residues: residues 273–285 and 291–306; these read IKTE…ENLH and DDMK…DIKV. Lys-274 is covalently cross-linked (Glycyl lysine isopeptide (Lys-Gly) (interchain with G-Cter in SUMO2)). At Ser-295 the chain carries Phosphoserine. Residue Lys-305 forms a Glycyl lysine isopeptide (Lys-Gly) (interchain with G-Cter in SUMO2) linkage. The residue at position 312 (Thr-312) is a Phosphothreonine. 2 positions are modified to phosphoserine: Ser-313 and Ser-314. Basic and acidic residues predominate over residues 323–335; that stretch reads PEQKIEREKERRM. A bHLH domain is found at 332-385; that stretch reads ERRMANNARERLRVRDINEAFKELGRMCQLHLKSEKPQTKLLILHQAVAVILSL. Glycyl lysine isopeptide (Lys-Gly) (interchain with G-Cter in SUMO2) cross-links involve residues Lys-364 and Lys-408. The class A specific domain stretch occupies residues 387–410; the sequence is QQVRERNLNPKAACLKRREEEKVS. The tract at residues 405 to 437 is disordered; sequence EEEKVSAASAEPPTTLPGTHPGLSETTNPMGHL. The segment covering 416–427 has biased composition (low complexity); sequence PPTTLPGTHPGL. Polar residues predominate over residues 428–437; the sequence is SETTNPMGHL.

As to quaternary structure, efficient DNA binding requires dimerization with another bHLH protein. Forms homo- or heterooligomers with myogenin, E12 and ITF2 proteins. Interacts with NEUROD2. Interacts with PTF1A. Interacts with RUNX1T1. Interacts with BHLHA9.

It localises to the nucleus. Transcriptional regulator. Involved in the initiation of neuronal differentiation. Activates transcription by binding to the E box (5'-CANNTG-3'). Participates in the control of inducible RP4 gene expression in salivary cells. Binds to the RIPE3 element of the insulin II promoter. May be involved in the functional network that regulates the development of the GnRH axis. The protein is Transcription factor 12 (TCF12) of Mesocricetus auratus (Golden hamster).